Here is a 902-residue protein sequence, read N- to C-terminus: AAA+ ATPase ClpV1 (902 aa).

In terms of domain architecture, Clp R spans 10–151 (FGKLNSLAYK…KVEALTERFD (142 aa)). 2 repeat regions span residues 13 to 78 (LNSL…LDRL) and 88 to 151 (LSSH…ERFD). 237–244 (GEAGVGKT) serves as a coordination point for ATP. Residues 441–559 (AEVDDSRRRI…AQLSALQGEE (119 aa)) are a coiled coil. 640–647 (GTSGVGKT) contacts ATP.

Belongs to the ClpA/ClpB family. Interacts with TagJ.

Its subcellular location is the cytoplasm. Component of the H1 type VI (H1-T6SS) secretion system that plays a role in the release of toxins targeting both eukaryotic and prokaryotic species. Acts as an AAA(+) ATPase that disassembles the contracted sheath, which resets the systems for reassembly of an extended sheath that is ready to fire again. This chain is AAA+ ATPase ClpV1 (clpV1), found in Pseudomonas aeruginosa (strain ATCC 15692 / DSM 22644 / CIP 104116 / JCM 14847 / LMG 12228 / 1C / PRS 101 / PAO1).